The chain runs to 396 residues: Protein TOC75-4, chloroplastic (396 aa).

Residues M1–D23 are Chloroplast intermembrane-facing. Residues N24 to L32 form a beta stranded membrane-spanning segment. The Cytoplasmic portion of the chain corresponds to N33–D87. Residues L88–R96 form a beta stranded membrane-spanning segment. At F97 to R140 the chain is on the chloroplast intermembrane side. The beta stranded transmembrane segment at D141–T148 threads the bilayer. Residues E149–E156 lie on the Cytoplasmic side of the membrane. A beta stranded transmembrane segment spans residues L157–E164. Over E165–P271 the chain is Chloroplast intermembrane. Residues P272–Y280 form a beta stranded membrane-spanning segment. Topologically, residues G281 to V292 are cytoplasmic. A beta stranded transmembrane segment spans residues F293 to V301. Residues R302 to S363 are Chloroplast intermembrane-facing. Residues Y364–L370 form a beta stranded membrane-spanning segment. Residues G371 to G384 lie on the Cytoplasmic side of the membrane. A beta stranded transmembrane segment spans residues T385–F392. Over G393–Y396 the chain is Chloroplast intermembrane.

The protein belongs to the TOC75 family. In terms of assembly, part of the TOC core complex that includes a protein for the specific recognition of transit peptides surrounded by a ring composed of four proteins forming translocation channels, and four to five GTP-binding proteins providing energy. This core complex can interact with components of the TIC complex to form a larger import complex. Chloroplastic protein precursors also interacts with these complexes. As to expression, expressed ubiquitously at low levels.

Its subcellular location is the plastid. It is found in the chloroplast outer membrane. In terms of biological role, mediates the insertion of proteins targeted to the outer membrane of chloroplasts. Required for the import of protein precursors into chloroplasts. Forms the voltage-dependent preprotein translocation channels (hydrophilic beta barrel) of the TOC complex in the chloroplastic outer membrane. Required for etioplast formation and/or etioplast-chloroplast transition during deetiolation. The protein is Protein TOC75-4, chloroplastic (TOC75-4) of Arabidopsis thaliana (Mouse-ear cress).